The chain runs to 88 residues: Putative defensin-like protein 256 (88 aa).

An N-terminal signal peptide occupies residues 1–25; it reads MKSSIFFKLLLLVSLLVVIFRQSYA. 3 disulfides stabilise this stretch: C30–C46, C36–C53, and C40–C55.

Belongs to the DEFL family.

It is found in the secreted. The sequence is that of Putative defensin-like protein 256 from Arabidopsis thaliana (Mouse-ear cress).